The following is a 293-amino-acid chain: MELKQLITFITAAEHVNFTLTAKMLNYAQSSVTSQIKSLEEEIGTPLFERLGKRLILTEAGKTFKSYAQKIIALTEEAKMATNQVRETTGTLKIGATESQCTYRLPPIIKEFKQAFPQVKLIFKPYISNEQAKEQLLQGQLDITFILDVNRMEDALHVESLIQDEIKMVAANDHPFPADLPVTLKDLQNETLLLTEDGCSYRTLFENNLHDSGIYPNKLEFVSIEAIKQCVMAGLGIGILPEMTVKDDIAAGRMKELNWQSDCPVFTQLAWHKDKWMSAPLKAFIDLTRKTFK.

An HTH lysR-type domain is found at 1–58 (MELKQLITFITAAEHVNFTLTAKMLNYAQSSVTSQIKSLEEEIGTPLFERLGKRLILT). A DNA-binding region (H-T-H motif) is located at residues 18 to 37 (FTLTAKMLNYAQSSVTSQIK).

The protein belongs to the LysR transcriptional regulatory family.

The protein resides in the cytoplasm. This is an uncharacterized protein from Bacillus subtilis (strain 168).